The sequence spans 64 residues: Large ribosomal subunit protein uL29 (64 aa).

It belongs to the universal ribosomal protein uL29 family.

The polypeptide is Large ribosomal subunit protein uL29 (Maridesulfovibrio salexigens (strain ATCC 14822 / DSM 2638 / NCIMB 8403 / VKM B-1763) (Desulfovibrio salexigens)).